Consider the following 329-residue polypeptide: Isopenicillin N synthase (329 aa).

Positions 87, 91, 183, and 189 each coordinate isopenicillin N. N-[(5S)-5-amino-5-carboxypentanoyl]-L-cysteinyl-D-valine contacts are provided by R87, Y91, S183, Y189, H212, and D214. Positions 180-286 constitute a Fe2OG dioxygenase domain; that stretch reads TLSSVSLIRY…RLSLPFFLNA (107 aa). The Fe(2+) site is built by H212, D214, and H268. A 2-oxoglutarate-binding site is contributed by R277. S279 contacts isopenicillin N. S279 is an N-[(5S)-5-amino-5-carboxypentanoyl]-L-cysteinyl-D-valine binding site.

The protein belongs to the iron/ascorbate-dependent oxidoreductase family. Requires Fe cation as cofactor. L-ascorbate serves as cofactor.

The catalysed reaction is N-[(5S)-5-amino-5-carboxypentanoyl]-L-cysteinyl-D-valine + O2 = isopenicillin N + 2 H2O. The protein operates within antibiotic biosynthesis; penicillin G biosynthesis; penicillin G from L-alpha-aminoadipate and L-cysteine and L-valine: step 2/3. Removes, in the presence of oxygen, 4 hydrogen atoms from delta-L-(alpha-aminoadipyl)-L-cysteinyl-D-valine (ACV) to form the azetidinone and thiazolidine rings of isopenicillin. The polypeptide is Isopenicillin N synthase (pcbC) (Streptomyces jumonjinensis).